A 441-amino-acid chain; its full sequence is Cobyrinate a,c-diamide synthase (441 aa).

The GATase cobBQ-type domain occupies 243 to 434 (TVAVADDAAF…AHVHPESTAF (192 aa)). Cys323 serves as the catalytic Nucleophile.

It belongs to the CobB/CbiA family. The cofactor is Mg(2+).

The catalysed reaction is cob(II)yrinate + 2 L-glutamine + 2 ATP + 2 H2O = cob(II)yrinate a,c diamide + 2 L-glutamate + 2 ADP + 2 phosphate + 2 H(+). It functions in the pathway cofactor biosynthesis; adenosylcobalamin biosynthesis; cob(II)yrinate a,c-diamide from sirohydrochlorin (anaerobic route): step 10/10. Its function is as follows. Catalyzes the ATP-dependent amidation of the two carboxylate groups at positions a and c of cobyrinate, using either L-glutamine or ammonia as the nitrogen source. The protein is Cobyrinate a,c-diamide synthase of Halobacterium salinarum (strain ATCC 700922 / JCM 11081 / NRC-1) (Halobacterium halobium).